The primary structure comprises 216 residues: GTP cyclohydrolase 1 (216 aa).

Zn(2+)-binding residues include C108, H111, and C179.

Belongs to the GTP cyclohydrolase I family. As to quaternary structure, toroid-shaped homodecamer, composed of two pentamers of five dimers.

The enzyme catalyses GTP + H2O = 7,8-dihydroneopterin 3'-triphosphate + formate + H(+). Its pathway is cofactor biosynthesis; 7,8-dihydroneopterin triphosphate biosynthesis; 7,8-dihydroneopterin triphosphate from GTP: step 1/1. This chain is GTP cyclohydrolase 1, found in Shewanella oneidensis (strain ATCC 700550 / JCM 31522 / CIP 106686 / LMG 19005 / NCIMB 14063 / MR-1).